We begin with the raw amino-acid sequence, 113 residues long: Hydrogenase maturation factor HypA (113 aa).

His2 provides a ligand contact to Ni(2+). Zn(2+) contacts are provided by Cys73, Cys76, Cys89, and Cys92.

It belongs to the HypA/HybF family.

In terms of biological role, involved in the maturation of [NiFe] hydrogenases. Required for nickel insertion into the metal center of the hydrogenase. The polypeptide is Hydrogenase maturation factor HypA (Legionella pneumophila subsp. pneumophila (strain Philadelphia 1 / ATCC 33152 / DSM 7513)).